We begin with the raw amino-acid sequence, 250 residues long: MITLIEIKKSLDEILSKIDGDKKYINEVAKKITPITYKLLYINETKCIRCNLCYKECPVDAIEKAKVKKSAKIIEDKCVKCEICAQTCPVGAIYVIEGRAEIEDSEVHYTIKEKSIPHRKIRLKKYELDENTCIKCGICARFCPTNAIKAVRRKSIEVNLDLCMGCGACAEVCPKKCIKVERELGEVIKTRDIEVDKNLCVGCLVCIEECPINAIDQDGDKVKINKDKCILCGRCVDVCPTNAIKMWEKK.

4Fe-4S ferredoxin-type domains follow at residues 38–67 (KLLY…KAKV), 69–98 (KSAK…VIEG), 124–153 (KKYE…AVRR), 154–183 (KSIE…VERE), 191–220 (RDIE…QDGD), and 220–249 (DKVK…MWEK). [4Fe-4S] cluster-binding residues include cysteine 47, cysteine 50, cysteine 53, cysteine 57, cysteine 78, cysteine 81, cysteine 84, cysteine 88, cysteine 133, cysteine 136, cysteine 139, cysteine 143, cysteine 163, cysteine 166, cysteine 169, cysteine 173, cysteine 200, cysteine 203, cysteine 206, cysteine 210, cysteine 229, cysteine 232, cysteine 235, and cysteine 239.

This is an uncharacterized protein from Methanocaldococcus jannaschii (strain ATCC 43067 / DSM 2661 / JAL-1 / JCM 10045 / NBRC 100440) (Methanococcus jannaschii).